Consider the following 179-residue polypeptide: MIP18 family protein C144.16 (179 aa).

A disordered region spans residues 1–26 (MSANLQNENPEVKELNQLPSRVEEEE).

The protein belongs to the MIP18 family.

In terms of biological role, may play a role in chromosome segregation through establishment of sister chromatid cohesion. The polypeptide is MIP18 family protein C144.16 (Schizosaccharomyces pombe (strain 972 / ATCC 24843) (Fission yeast)).